A 521-amino-acid chain; its full sequence is Cytochrome P450 1A1 (521 aa).

Residue Phe-229 coordinates substrate. Cys-463 lines the heme pocket.

It belongs to the cytochrome P450 family. It depends on heme as a cofactor.

It localises to the endoplasmic reticulum membrane. The protein resides in the microsome membrane. The catalysed reaction is an organic molecule + reduced [NADPH--hemoprotein reductase] + O2 = an alcohol + oxidized [NADPH--hemoprotein reductase] + H2O + H(+). In terms of biological role, cytochromes P450 are a group of heme-thiolate monooxygenases. They oxidize a variety of structurally unrelated compounds, including steroids, fatty acids, and xenobiotics. In Chaetodon capistratus (Four-eye butterflyfish), this protein is Cytochrome P450 1A1 (cyp1a1).